The chain runs to 35 residues: Photosystem II reaction center protein M (35 aa).

A helical membrane pass occupies residues 5 to 25; that stretch reads ILAFIATALFILVPTAFLLII.

The protein belongs to the PsbM family. In terms of assembly, PSII is composed of 1 copy each of membrane proteins PsbA, PsbB, PsbC, PsbD, PsbE, PsbF, PsbH, PsbI, PsbJ, PsbK, PsbL, PsbM, PsbT, PsbX, PsbY, PsbZ, Psb30/Ycf12, at least 3 peripheral proteins of the oxygen-evolving complex and a large number of cofactors. It forms dimeric complexes.

It is found in the plastid. It localises to the chloroplast thylakoid membrane. One of the components of the core complex of photosystem II (PSII). PSII is a light-driven water:plastoquinone oxidoreductase that uses light energy to abstract electrons from H(2)O, generating O(2) and a proton gradient subsequently used for ATP formation. It consists of a core antenna complex that captures photons, and an electron transfer chain that converts photonic excitation into a charge separation. This subunit is found at the monomer-monomer interface. This is Photosystem II reaction center protein M from Amborella trichopoda.